A 213-amino-acid chain; its full sequence is Ribosomal RNA small subunit methyltransferase G (213 aa).

Residues Gly-81, Leu-86, 132–133 (VE), and Arg-147 each bind S-adenosyl-L-methionine.

Belongs to the methyltransferase superfamily. RNA methyltransferase RsmG family.

The protein resides in the cytoplasm. It catalyses the reaction guanosine(527) in 16S rRNA + S-adenosyl-L-methionine = N(7)-methylguanosine(527) in 16S rRNA + S-adenosyl-L-homocysteine. Its function is as follows. Specifically methylates the N7 position of guanine in position 527 of 16S rRNA. In Mannheimia succiniciproducens (strain KCTC 0769BP / MBEL55E), this protein is Ribosomal RNA small subunit methyltransferase G.